The following is a 148-amino-acid chain: Ribonuclease H (148 aa).

The 143-residue stretch at 1–143 (MNQVVIYTDG…ADMLANKGVE (143 aa)) folds into the RNase H type-1 domain. Mg(2+)-binding residues include Asp-9, Glu-47, Asp-69, and Asp-135.

Belongs to the RNase H family. As to quaternary structure, monomer. It depends on Mg(2+) as a cofactor.

The protein resides in the cytoplasm. It carries out the reaction Endonucleolytic cleavage to 5'-phosphomonoester.. In terms of biological role, endonuclease that specifically degrades the RNA of RNA-DNA hybrids. The polypeptide is Ribonuclease H (Acidovorax sp. (strain JS42)).